A 700-amino-acid polypeptide reads, in one-letter code: MKKNLIIVESPAKAKTIGNFLGKDYEVIASKGHIRDLPKSSFGIKIEDDEFIPEYRITSDHSALVKELKSKAKDAKEVYLATDEDREGEAIAYHIAKAIGKDENTLPRIVFHEITKSAIENALKNPRKLNMHSVNAQQTRRLLDRIVGYKLSPLLGQKIQRGLSAGRVQSAALKIIVDREKEIRAFVPLEYFSIDMIFQKDLDAELVEFDKAKIEKLTITNKDRAKLILEACKNEVYSISDIESKERKIAPPPPFMTSTLQQSASNRLGFNPKKTMMIAQKLYEGVNTHEGVMGVITYMRTDSLNLAKEAVENARKFIQANFGKDYLPSKANVYTTKTKGAQEAHEAIRPTNLSFTPEIAAKFLDKDELKLYTLIYNRFLACQMSPAISQTQNVFVKNDRVVFKISGRKILFDGYYKVYGDMDKDKILPNFKIGQNLKVQNLEMNSHFTEPPSRYSEAGLVKKLESLGIGRPSTYAPTISILTSRDYVTIDKKQLIPSDVAFNVTEVLEKNFSDIVDSKFTSNLENTLDEIAEDKADWQETLKEFYYPFMRKIEEGKTKIASQKTVTKLGESCPDCGGELAIRKGRFGEFVACLNFPKCKYSRNLKSESKNESENTAAKAKANGTGITCPSCQKGEIVERFSKRGKFYGCSAYPKCNFISKYKPSEEKCEECGETLVIKELKKGTFLECLKCKIKKEMKD.

Positions 3–114 (KNLIIVESPA…TLPRIVFHEI (112 aa)) constitute a Toprim domain. 2 residues coordinate Mg(2+): E9 and D83. The 424-residue stretch at 130 to 553 (NMHSVNAQQT…EFYYPFMRKI (424 aa)) folds into the Topo IA-type catalytic domain. Residues 164 to 169 (SAGRVQ) form an interaction with DNA region. Y298 acts as the O-(5'-phospho-DNA)-tyrosine intermediate in catalysis. 3 consecutive C4-type zinc fingers follow at residues 573–599 (CPDCGGELAIRKGRFGEFVACLNFPKC), 629–656 (CPSCQKGEIVERFSKRGKFYGCSAYPKC), and 669–692 (CEECGETLVIKELKKGTFLECLKC).

It belongs to the type IA topoisomerase family. Monomer. Requires Mg(2+) as cofactor.

It catalyses the reaction ATP-independent breakage of single-stranded DNA, followed by passage and rejoining.. Functionally, releases the supercoiling and torsional tension of DNA, which is introduced during the DNA replication and transcription, by transiently cleaving and rejoining one strand of the DNA duplex. Introduces a single-strand break via transesterification at a target site in duplex DNA. The scissile phosphodiester is attacked by the catalytic tyrosine of the enzyme, resulting in the formation of a DNA-(5'-phosphotyrosyl)-enzyme intermediate and the expulsion of a 3'-OH DNA strand. The free DNA strand then undergoes passage around the unbroken strand, thus removing DNA supercoils. Finally, in the religation step, the DNA 3'-OH attacks the covalent intermediate to expel the active-site tyrosine and restore the DNA phosphodiester backbone. This Campylobacter jejuni subsp. jejuni serotype O:2 (strain ATCC 700819 / NCTC 11168) protein is DNA topoisomerase 1.